A 549-amino-acid polypeptide reads, in one-letter code: MKRVLTALAATLPFAANAADAISGAVERQPTNWQAIIMFLIFVVFTLGITYWASKRVRSRSDYYTAGGNITGFQNGLAIAGDYMSAASFLGISALVFTSGYDGLIYSLGFLVGWPIILFLIAERLRNLGRYTSADVASYRLKQGPIRILSACGSLVVVALYLIAQMVGAGKLIELLFGLNYHIAVVLVGVLMMMYVLFGGMLATTWVQIIKAVLLLFGASFMAFMVMKHVGFSFNNLFSEAMAVHPKGVDIMKPGGLVKDPISALSLGLGLMFGTAGLPHILMRFFTVSDAREARKSVFYATGFMGYFYILTFIIGFGAIMLVGANPEYKDAAGHLIGGNNMAAVHLANAVGGNLFLGFISAVAFATILAVVADLTLAGASAVSHDLYANVFKKGATEREELRVSKITVLILGVIAIILGVLFENQNIAFMVGLAFAIAASCNFPIILLSMYWSKLTTRGAMLGGWLGLITAVVLMILGPTIWVQILGHEKAIFPYEYPALFSISVAFLGIWFFSATDNSAEGARERELFRAQFIRSQTGFGVEQGRAH.

At 1–32 (MKRVLTALAATLPFAANAADAISGAVERQPTN) the chain is on the periplasmic side. A helical transmembrane segment spans residues 33 to 55 (WQAIIMFLIFVVFTLGITYWASK). At 56–75 (RVRSRSDYYTAGGNITGFQN) the chain is on the cytoplasmic side. A helical membrane pass occupies residues 76–98 (GLAIAGDYMSAASFLGISALVFT). At 99–102 (SGYD) the chain is on the periplasmic side. The helical transmembrane segment at 103-125 (GLIYSLGFLVGWPIILFLIAERL) threads the bilayer. Residues 126–145 (RNLGRYTSADVASYRLKQGP) are Cytoplasmic-facing. The chain crosses the membrane as a helical span at residues 146-168 (IRILSACGSLVVVALYLIAQMVG). Over 169–182 (AGKLIELLFGLNYH) the chain is Periplasmic. Residues 183–205 (IAVVLVGVLMMMYVLFGGMLATT) traverse the membrane as a helical segment. The Cytoplasmic portion of the chain corresponds to 206–211 (WVQIIK). A helical transmembrane segment spans residues 212-234 (AVLLLFGASFMAFMVMKHVGFSF). Residues 235–260 (NNLFSEAMAVHPKGVDIMKPGGLVKD) lie on the Periplasmic side of the membrane. Residues 261-283 (PISALSLGLGLMFGTAGLPHILM) form a helical membrane-spanning segment. Residues 284-302 (RFFTVSDAREARKSVFYAT) are Cytoplasmic-facing. The chain crosses the membrane as a helical span at residues 303–325 (GFMGYFYILTFIIGFGAIMLVGA). Residues 326 to 349 (NPEYKDAAGHLIGGNNMAAVHLAN) are Periplasmic-facing. The chain crosses the membrane as a helical span at residues 350–372 (AVGGNLFLGFISAVAFATILAVV). The Cytoplasmic segment spans residues 373–401 (ADLTLAGASAVSHDLYANVFKKGATEREE). The chain crosses the membrane as a helical span at residues 402 to 424 (LRVSKITVLILGVIAIILGVLFE). At 425–427 (NQN) the chain is on the periplasmic side. Residues 428 to 450 (IAFMVGLAFAIAASCNFPIILLS) form a helical membrane-spanning segment. Residues 451 to 461 (MYWSKLTTRGA) are Cytoplasmic-facing. The chain crosses the membrane as a helical span at residues 462–484 (MLGGWLGLITAVVLMILGPTIWV). Over 485–493 (QILGHEKAI) the chain is Periplasmic. The helical transmembrane segment at 494-516 (FPYEYPALFSISVAFLGIWFFSA) threads the bilayer. Residues 517–549 (TDNSAEGARERELFRAQFIRSQTGFGVEQGRAH) are Cytoplasmic-facing.

This sequence belongs to the sodium:solute symporter (SSF) (TC 2.A.21) family.

Its subcellular location is the cell inner membrane. Its function is as follows. Transports acetate. The polypeptide is Cation/acetate symporter ActP (actP) (Shigella flexneri).